Consider the following 105-residue polypeptide: Platelet factor 4 (105 aa).

A signal peptide spans 1 to 29 (MSVAAVFRGLRPSPELLLLGLLFLPAVVA). T31 carries an O-linked (GalNAc...) threonine glycan. 2 cysteine pairs are disulfide-bonded: C44/C71 and C46/C87. S61 bears the Phosphoserine mark. 96 to 102 (KKVIKKI) serves as a coordination point for heparin.

This sequence belongs to the intercrine alpha (chemokine CxC) family. Homotetramer. Interacts with TNFAIP6 (via Link domain). Interacts with CCR1. Interacts with CXCR3. Interacts with THBD; this interaction enhances generation of activated protein C.

The protein localises to the secreted. In terms of biological role, chemokine released during platelet aggregation that plays a role in different biological processes including hematopoiesis, cell proliferation, differentiation, and activation. Acts via different functional receptors including CCR1, CXCR3A or CXCR3B. Upon interaction with CXCR3A receptor, induces activated T-lymphocytes migration mediated via downstream Ras/extracellular signal-regulated kinase (ERK) signaling. Neutralizes the anticoagulant effect of heparin by binding more strongly to heparin than to the chondroitin-4-sulfate chains of the carrier molecule. Plays a role in the inhibition of hematopoiesis and in the maintenance of hematopoietic stem cell (HSC) quiescence. Chemotactic for neutrophils and monocytes via CCR1. Inhibits endothelial cell proliferation. In cooperation with toll-like receptor 8/TLR8, induces chromatin remodeling and activates inflammatory gene expression via the TBK1-IRF5 axis. In addition, induces myofibroblast differentiation and collagen synthesis in different precursor cells, including endothelial cells, by stimulating endothelial-to-mesenchymal transition. Interacts with thrombomodulin/THBD to enhance the activation of protein C and thus potentiates its anticoagulant activity. In Mus musculus (Mouse), this protein is Platelet factor 4 (Pf4).